The sequence spans 429 residues: Enolase (429 aa).

Position 162 (glutamine 162) interacts with (2R)-2-phosphoglycerate. The active-site Proton donor is the glutamate 204. Mg(2+) contacts are provided by aspartate 241, glutamate 283, and aspartate 310. Residues lysine 335, arginine 364, serine 365, and lysine 386 each contribute to the (2R)-2-phosphoglycerate site. The Proton acceptor role is filled by lysine 335.

This sequence belongs to the enolase family. Mg(2+) serves as cofactor.

It localises to the cytoplasm. Its subcellular location is the secreted. The protein localises to the cell surface. It carries out the reaction (2R)-2-phosphoglycerate = phosphoenolpyruvate + H2O. It functions in the pathway carbohydrate degradation; glycolysis; pyruvate from D-glyceraldehyde 3-phosphate: step 4/5. Catalyzes the reversible conversion of 2-phosphoglycerate (2-PG) into phosphoenolpyruvate (PEP). It is essential for the degradation of carbohydrates via glycolysis. The protein is Enolase of Mycobacterium avium (strain 104).